Here is a 505-residue protein sequence, read N- to C-terminus: 2,3-bisphosphoglycerate-independent phosphoglycerate mutase (505 aa).

Mn(2+) contacts are provided by D15 and S65. The Phosphoserine intermediate role is filled by S65. Substrate is bound by residues H126, 156-157, R187, R193, 260-263, and K333; these read RD and RPDR. Residues D398, H402, D439, H440, and H457 each contribute to the Mn(2+) site.

It belongs to the BPG-independent phosphoglycerate mutase family. As to quaternary structure, monomer. Mn(2+) is required as a cofactor.

It carries out the reaction (2R)-2-phosphoglycerate = (2R)-3-phosphoglycerate. The protein operates within carbohydrate degradation; glycolysis; pyruvate from D-glyceraldehyde 3-phosphate: step 3/5. Catalyzes the interconversion of 2-phosphoglycerate and 3-phosphoglycerate. The polypeptide is 2,3-bisphosphoglycerate-independent phosphoglycerate mutase (Mycoplasmopsis pulmonis (strain UAB CTIP) (Mycoplasma pulmonis)).